Reading from the N-terminus, the 647-residue chain is DNA mismatch repair protein MutL (647 aa).

Residues 375–395 form a disordered region; it reads KQEEPQAVKQPPQLWQPPKQE. Over residues 383-395 the composition is skewed to low complexity; that stretch reads KQPPQLWQPPKQE.

This sequence belongs to the DNA mismatch repair MutL/HexB family.

Functionally, this protein is involved in the repair of mismatches in DNA. It is required for dam-dependent methyl-directed DNA mismatch repair. May act as a 'molecular matchmaker', a protein that promotes the formation of a stable complex between two or more DNA-binding proteins in an ATP-dependent manner without itself being part of a final effector complex. The protein is DNA mismatch repair protein MutL of Bacillus cereus (strain B4264).